The following is a 256-amino-acid chain: Pyridoxine 5'-phosphate synthase (256 aa).

Positions 8 and 19 each coordinate 3-amino-2-oxopropyl phosphate. The active-site Proton acceptor is H44. 1-deoxy-D-xylulose 5-phosphate contacts are provided by R46 and H51. E74 serves as the catalytic Proton acceptor. Residue T111 participates in 1-deoxy-D-xylulose 5-phosphate binding. H202 functions as the Proton donor in the catalytic mechanism. 3-amino-2-oxopropyl phosphate-binding positions include D203 and 225 to 226 (GH).

The protein belongs to the PNP synthase family. In terms of assembly, homooctamer; tetramer of dimers.

The protein localises to the cytoplasm. The catalysed reaction is 3-amino-2-oxopropyl phosphate + 1-deoxy-D-xylulose 5-phosphate = pyridoxine 5'-phosphate + phosphate + 2 H2O + H(+). It functions in the pathway cofactor biosynthesis; pyridoxine 5'-phosphate biosynthesis; pyridoxine 5'-phosphate from D-erythrose 4-phosphate: step 5/5. Functionally, catalyzes the complicated ring closure reaction between the two acyclic compounds 1-deoxy-D-xylulose-5-phosphate (DXP) and 3-amino-2-oxopropyl phosphate (1-amino-acetone-3-phosphate or AAP) to form pyridoxine 5'-phosphate (PNP) and inorganic phosphate. The chain is Pyridoxine 5'-phosphate synthase from Xanthomonas campestris pv. campestris (strain 8004).